Consider the following 73-residue polypeptide: UPF0154 protein BCG9842_B1526 (73 aa).

The chain crosses the membrane as a helical span at residues 3 to 23 (IWLGILVGVVALVAGVALGFF).

Belongs to the UPF0154 family.

It is found in the cell membrane. This chain is UPF0154 protein BCG9842_B1526, found in Bacillus cereus (strain G9842).